Here is a 278-residue protein sequence, read N- to C-terminus: tRNA uridine(34) hydroxylase (278 aa).

One can recognise a Rhodanese domain in the interval 122-216 (QDPDVVVIDT…YLETIAPEES (95 aa)). Cys176 (cysteine persulfide intermediate) is an active-site residue.

This sequence belongs to the TrhO family.

It carries out the reaction uridine(34) in tRNA + AH2 + O2 = 5-hydroxyuridine(34) in tRNA + A + H2O. Its function is as follows. Catalyzes oxygen-dependent 5-hydroxyuridine (ho5U) modification at position 34 in tRNAs. The sequence is that of tRNA uridine(34) hydroxylase from Synechocystis sp. (strain ATCC 27184 / PCC 6803 / Kazusa).